The primary structure comprises 412 residues: Gamma-glutamyl phosphate reductase (412 aa).

The protein belongs to the gamma-glutamyl phosphate reductase family.

Its subcellular location is the cytoplasm. The catalysed reaction is L-glutamate 5-semialdehyde + phosphate + NADP(+) = L-glutamyl 5-phosphate + NADPH + H(+). The protein operates within amino-acid biosynthesis; L-proline biosynthesis; L-glutamate 5-semialdehyde from L-glutamate: step 2/2. Its function is as follows. Catalyzes the NADPH-dependent reduction of L-glutamate 5-phosphate into L-glutamate 5-semialdehyde and phosphate. The product spontaneously undergoes cyclization to form 1-pyrroline-5-carboxylate. In Streptococcus suis (strain 98HAH33), this protein is Gamma-glutamyl phosphate reductase.